Consider the following 220-residue polypeptide: MAKQEYKQLPKRSEVHSATEQFKDTIKTSLGLDLFKGLGLTIKEFFSPSVTIHYPMEQLPLSPRYRAVHHLQRLLDSGSERCIGCGLCEKICTSNCIRIITHKGEDNRKKIDSYTINLGRCIYCGLCAEVCPELAIVMGNRFENASTQRSQYGSKSEFLTNEQDAKNCSHAEFLGFGAVSPNYNERMQATPLDYVQEPSKEESKEETPTRSESHKGDENV.

4Fe-4S ferredoxin-type domains are found at residues 71 to 102 and 112 to 141; these read LQRLLDSGSERCIGCGLCEKICTSNCIRIITH and DSYTINLGRCIYCGLCAEVCPELAIVMGNR. Positions 82, 85, 88, 92, 121, 124, 127, and 131 each coordinate [4Fe-4S] cluster. Residues 187-220 are disordered; sequence MQATPLDYVQEPSKEESKEETPTRSESHKGDENV. Positions 198–220 are enriched in basic and acidic residues; it reads PSKEESKEETPTRSESHKGDENV.

Belongs to the complex I 23 kDa subunit family. As to quaternary structure, NDH-1 is composed of 14 different subunits. Subunits NuoA, H, J, K, L, M, N constitute the membrane sector of the complex. It depends on [4Fe-4S] cluster as a cofactor.

It is found in the cell inner membrane. The enzyme catalyses a quinone + NADH + 5 H(+)(in) = a quinol + NAD(+) + 4 H(+)(out). In terms of biological role, NDH-1 shuttles electrons from NADH, via FMN and iron-sulfur (Fe-S) centers, to quinones in the respiratory chain. The immediate electron acceptor for the enzyme in this species is believed to be ubiquinone. Couples the redox reaction to proton translocation (for every two electrons transferred, four hydrogen ions are translocated across the cytoplasmic membrane), and thus conserves the redox energy in a proton gradient. The protein is NADH-quinone oxidoreductase subunit I of Helicobacter pylori (strain G27).